Here is a 414-residue protein sequence, read N- to C-terminus: Putative MSV199 domain-containing protein 148R (414 aa).

Positions 209–293 (DKMQISSLET…DSVVEKLGIA (85 aa)) form a coiled coil.

The polypeptide is Putative MSV199 domain-containing protein 148R (Acheta domesticus (House cricket)).